We begin with the raw amino-acid sequence, 549 residues long: Glucose-6-phosphate isomerase (549 aa).

Glu355 serves as the catalytic Proton donor. Active-site residues include His386 and Lys514.

The protein belongs to the GPI family.

Its subcellular location is the cytoplasm. It carries out the reaction alpha-D-glucose 6-phosphate = beta-D-fructose 6-phosphate. Its pathway is carbohydrate biosynthesis; gluconeogenesis. It participates in carbohydrate degradation; glycolysis; D-glyceraldehyde 3-phosphate and glycerone phosphate from D-glucose: step 2/4. In terms of biological role, catalyzes the reversible isomerization of glucose-6-phosphate to fructose-6-phosphate. This is Glucose-6-phosphate isomerase from Salmonella gallinarum (strain 287/91 / NCTC 13346).